The chain runs to 619 residues: Translation initiation factor IF-2 (619 aa).

A tr-type G domain is found at 120 to 289; that stretch reads PRPPIVTIMG…ILLLGEVEGY (170 aa). A G1 region spans residues 129–136; sequence GHVDHGKT. A GTP-binding site is contributed by 129–136; that stretch reads GHVDHGKT. The tract at residues 154–158 is G2; it reads GITQK. A G3 region spans residues 176 to 179; it reads DTPG. GTP-binding positions include 176-180 and 230-233; these read DTPGH and NKMD. Residues 230–233 form a G4 region; the sequence is NKMD. A G5 region spans residues 266–268; that stretch reads SAL.

Belongs to the TRAFAC class translation factor GTPase superfamily. Classic translation factor GTPase family. IF-2 subfamily.

It localises to the cytoplasm. Its function is as follows. One of the essential components for the initiation of protein synthesis. Protects formylmethionyl-tRNA from spontaneous hydrolysis and promotes its binding to the 30S ribosomal subunits. Also involved in the hydrolysis of GTP during the formation of the 70S ribosomal complex. The chain is Translation initiation factor IF-2 (infB) from Mycoplasma genitalium (strain ATCC 33530 / DSM 19775 / NCTC 10195 / G37) (Mycoplasmoides genitalium).